An 85-amino-acid chain; its full sequence is MASDLGFSPPEVPEPTFLENLLRYGLFLGAIFQLICVLAIIVPIPKSHEAEAEQAEPRSAEGPKKPKAAIASTNKRPKKETKKKR.

A helical transmembrane segment spans residues 24–44 (YGLFLGAIFQLICVLAIIVPI). Over residues 49–64 (EAEAEQAEPRSAEGPK) the composition is skewed to basic and acidic residues. The tract at residues 49–85 (EAEAEQAEPRSAEGPKKPKAAIASTNKRPKKETKKKR) is disordered. Residues 75–85 (KRPKKETKKKR) show a composition bias toward basic residues.

It belongs to the UPF0239 family.

Its subcellular location is the membrane. This is Protein MANBAL (Manbal) from Mus musculus (Mouse).